A 277-amino-acid polypeptide reads, in one-letter code: Bifunctional protein FolD (277 aa).

NADP(+) contacts are provided by residues 156–158, S183, and I224; that span reads GRS.

The protein belongs to the tetrahydrofolate dehydrogenase/cyclohydrolase family. In terms of assembly, homodimer.

It carries out the reaction (6R)-5,10-methylene-5,6,7,8-tetrahydrofolate + NADP(+) = (6R)-5,10-methenyltetrahydrofolate + NADPH. The enzyme catalyses (6R)-5,10-methenyltetrahydrofolate + H2O = (6R)-10-formyltetrahydrofolate + H(+). It participates in one-carbon metabolism; tetrahydrofolate interconversion. Catalyzes the oxidation of 5,10-methylenetetrahydrofolate to 5,10-methenyltetrahydrofolate and then the hydrolysis of 5,10-methenyltetrahydrofolate to 10-formyltetrahydrofolate. The polypeptide is Bifunctional protein FolD (Kosmotoga olearia (strain ATCC BAA-1733 / DSM 21960 / TBF 19.5.1)).